The following is a 432-amino-acid chain: Enolase (432 aa).

Gln167 is a (2R)-2-phosphoglycerate binding site. Glu209 (proton donor) is an active-site residue. Mg(2+)-binding residues include Asp246, Glu290, and Asp317. (2R)-2-phosphoglycerate is bound by residues Lys342, Arg371, Ser372, and Lys393. Catalysis depends on Lys342, which acts as the Proton acceptor.

This sequence belongs to the enolase family. As to quaternary structure, component of the RNA degradosome, a multiprotein complex involved in RNA processing and mRNA degradation. Requires Mg(2+) as cofactor.

Its subcellular location is the cytoplasm. The protein localises to the secreted. The protein resides in the cell surface. It catalyses the reaction (2R)-2-phosphoglycerate = phosphoenolpyruvate + H2O. It functions in the pathway carbohydrate degradation; glycolysis; pyruvate from D-glyceraldehyde 3-phosphate: step 4/5. In terms of biological role, catalyzes the reversible conversion of 2-phosphoglycerate (2-PG) into phosphoenolpyruvate (PEP). It is essential for the degradation of carbohydrates via glycolysis. The polypeptide is Enolase (Klebsiella pneumoniae subsp. pneumoniae (strain ATCC 700721 / MGH 78578)).